The chain runs to 345 residues: Ferrochelatase (345 aa).

Fe cation-binding residues include histidine 199 and glutamate 302.

It belongs to the ferrochelatase family.

It is found in the cytoplasm. It catalyses the reaction heme b + 2 H(+) = protoporphyrin IX + Fe(2+). The protein operates within porphyrin-containing compound metabolism; protoheme biosynthesis; protoheme from protoporphyrin-IX: step 1/1. Functionally, catalyzes the ferrous insertion into protoporphyrin IX. The protein is Ferrochelatase of Porphyromonas gingivalis (strain ATCC 33277 / DSM 20709 / CIP 103683 / JCM 12257 / NCTC 11834 / 2561).